The sequence spans 65 residues: Large ribosomal subunit protein bL35 (65 aa).

This sequence belongs to the bacterial ribosomal protein bL35 family.

This chain is Large ribosomal subunit protein bL35, found in Thermotoga neapolitana (strain ATCC 49049 / DSM 4359 / NBRC 107923 / NS-E).